The following is a 107-amino-acid chain: UPF0145 protein CHY_0465 (107 aa).

The protein belongs to the UPF0145 family.

This chain is UPF0145 protein CHY_0465, found in Carboxydothermus hydrogenoformans (strain ATCC BAA-161 / DSM 6008 / Z-2901).